A 120-amino-acid polypeptide reads, in one-letter code: Large ribosomal subunit protein bL20 (120 aa).

Belongs to the bacterial ribosomal protein bL20 family.

Functionally, binds directly to 23S ribosomal RNA and is necessary for the in vitro assembly process of the 50S ribosomal subunit. It is not involved in the protein synthesizing functions of that subunit. The polypeptide is Large ribosomal subunit protein bL20 (Ureaplasma parvum serovar 3 (strain ATCC 27815 / 27 / NCTC 11736)).